A 227-amino-acid polypeptide reads, in one-letter code: MQIQPHPSGALLLLLLSNLLMWENVASVPRCIMENGGCQKVLNYLFNMTSTISESFNTLSSETLNDFYTEFDPHQTFQNRPAMTCHTSSRSIPNNKRKAERMEPAALLNVIIRMLASWKNLLYHVENNMANLDGTPYAIISKVKLIDRQIKKLTKNLQDIKTILSQVHPELKEKENYPVWSGEPYVQKSKRRTQLFGLHSLFFCLYSDAEKVSDYVNILRNKIVPNE.

Residues 1–27 (MQIQPHPSGALLLLLLSNLLMWENVAS) form the signal peptide. Residue N47 is glycosylated (N-linked (GlcNAc...) asparagine). Cysteines 85 and 204 form a disulfide.

The protein belongs to the somatotropin/prolactin family. As to expression, expressed specifically in placenta. Highly expressed in invasive trophoblast cells lining the central placental vessel.

It localises to the secreted. The sequence is that of Prolactin-5A1 (Prl5a1) from Rattus norvegicus (Rat).